Reading from the N-terminus, the 624-residue chain is Exocyst complex component EXO70B1 (624 aa).

The tract at residues 148–176 is disordered; that stretch reads FGLNPQGDAGAMNHRFDSEEEEDDDRDFN.

The protein belongs to the EXO70 family. As to quaternary structure, interacts with EXO70B2, SEC5A and EXO84B. Binds to PUB18. Binds directly to B1L at the plasma membrane and in small vesicles. In terms of processing, target of the E3 ubiquitin-protein ligase PUB18 that mediates its ubiquitination and degradation via the 26S proteasome.

Its subcellular location is the cytoplasmic vesicle. The protein resides in the phagosome. The protein localises to the endomembrane system. It is found in the cell membrane. It localises to the vesicle. Component of an exocyst subcomplex specifically involved in autophagy-related, Golgi-independent membrane traffic to the vacuole. Regulates autophagosome formation and autophagy-related Golgi-independent import into the vacuole. Positive regulator of both abscisic acid (ABA)-promoted and mannitol (drought)-promoted stomatal closure. Involved in the regulation of lateral root formation. The protein is Exocyst complex component EXO70B1 of Arabidopsis thaliana (Mouse-ear cress).